The primary structure comprises 138 residues: Basic phospholipase A2 homolog ammodytin L (138 aa).

The first 16 residues, 1–16, serve as a signal peptide directing secretion; that stretch reads MRILWIVAVCLIGVEG. Cystine bridges form between Cys-42–Cys-131, Cys-44–Cys-60, Cys-59–Cys-111, Cys-65–Cys-138, Cys-66–Cys-104, Cys-73–Cys-97, and Cys-91–Cys-102. Residues 121–133 form an important for membrane-damaging activities in eukaryotes and bacteria; heparin-binding region; it reads KKYKVYLRFKCKG.

The protein belongs to the phospholipase A2 family. Group II subfamily. S49 sub-subfamily. In terms of tissue distribution, expressed by the venom gland.

The protein resides in the secreted. Functionally, snake venom phospholipase A2 homolog that lacks enzymatic activity. Is very active in inducing myonecrosis in vivo and shows a potent calcium-independent membrane-damaging activity in vitro, most probably by binding and incorporating in the membrane. Also acts as a presynaptic neurotoxin. A model of myotoxic mechanism has been proposed: an apo Lys49-PLA2 is activated by the entrance of a hydrophobic molecule (e.g. fatty acid) at the hydrophobic channel of the protein leading to a reorientation of a monomer. This reorientation causes a transition between 'inactive' to 'active' states, causing alignment of C-terminal and membrane-docking sites (MDoS) side-by-side and putting the membrane-disruption sites (MDiS) in the same plane, exposed to solvent and in a symmetric position for both monomers. The MDoS region stabilizes the toxin on membrane by the interaction of charged residues with phospholipid head groups. Subsequently, the MDiS region destabilizes the membrane with penetration of hydrophobic residues. This insertion causes a disorganization of the membrane, allowing an uncontrolled influx of ions (i.e. calcium and sodium), and eventually triggering irreversible intracellular alterations and cell death. This chain is Basic phospholipase A2 homolog ammodytin L, found in Vipera ammodytes ammodytes (Western sand viper).